We begin with the raw amino-acid sequence, 78 residues long: LYR motif-containing protein 9 (78 aa).

The protein belongs to the complex I LYR family. LYRM9 subfamily.

The chain is LYR motif-containing protein 9 (Lyrm9) from Mus musculus (Mouse).